The sequence spans 352 residues: Probable protein phosphatase 2C 42 (352 aa).

Positions 26–321 (AYASSAMQGY…DNMSVILVRF (296 aa)) constitute a PPM-type phosphatase domain. Mn(2+)-binding residues include aspartate 62, glycine 63, aspartate 267, and aspartate 312. The tract at residues 328–352 (RGARAATSSTSTGTVPSRHSKSISL) is disordered. The segment covering 329–341 (GARAATSSTSTGT) has biased composition (low complexity).

Belongs to the PP2C family. Mg(2+) serves as cofactor. The cofactor is Mn(2+).

The catalysed reaction is O-phospho-L-seryl-[protein] + H2O = L-seryl-[protein] + phosphate. The enzyme catalyses O-phospho-L-threonyl-[protein] + H2O = L-threonyl-[protein] + phosphate. This Oryza sativa subsp. japonica (Rice) protein is Probable protein phosphatase 2C 42.